Consider the following 86-residue polypeptide: Putative membrane protein insertion efficiency factor (86 aa).

It belongs to the UPF0161 family.

It is found in the cell inner membrane. Its function is as follows. Could be involved in insertion of integral membrane proteins into the membrane. The polypeptide is Putative membrane protein insertion efficiency factor (Mannheimia succiniciproducens (strain KCTC 0769BP / MBEL55E)).